The primary structure comprises 630 residues: tRNA uridine 5-carboxymethylaminomethyl modification enzyme MnmG (630 aa).

13–18 (GGGHAG) is an FAD binding site. Position 273-287 (273-287 (GPRYCPSIEDKIHRF)) interacts with NAD(+).

It belongs to the MnmG family. As to quaternary structure, homodimer. Heterotetramer of two MnmE and two MnmG subunits. The cofactor is FAD.

Its subcellular location is the cytoplasm. Its function is as follows. NAD-binding protein involved in the addition of a carboxymethylaminomethyl (cmnm) group at the wobble position (U34) of certain tRNAs, forming tRNA-cmnm(5)s(2)U34. The sequence is that of tRNA uridine 5-carboxymethylaminomethyl modification enzyme MnmG from Pseudomonas putida (strain W619).